A 292-amino-acid polypeptide reads, in one-letter code: Glycine--tRNA ligase alpha subunit (292 aa).

The protein belongs to the class-II aminoacyl-tRNA synthetase family. Tetramer of two alpha and two beta subunits.

Its subcellular location is the cytoplasm. The catalysed reaction is tRNA(Gly) + glycine + ATP = glycyl-tRNA(Gly) + AMP + diphosphate. The protein is Glycine--tRNA ligase alpha subunit of Buchnera aphidicola subsp. Schizaphis graminum (strain Sg).